Consider the following 443-residue polypeptide: ATP-dependent protease ATPase subunit HslU (443 aa).

ATP is bound by residues Ile18 and 60–65 (GVGKTE). The interval 142–162 (LGFEASPSEESNATRQKFRKK) is disordered. Residues Asp256, Glu321, and Arg393 each contribute to the ATP site.

This sequence belongs to the ClpX chaperone family. HslU subfamily. As to quaternary structure, a double ring-shaped homohexamer of HslV is capped on each side by a ring-shaped HslU homohexamer. The assembly of the HslU/HslV complex is dependent on binding of ATP.

The protein resides in the cytoplasm. In terms of biological role, ATPase subunit of a proteasome-like degradation complex; this subunit has chaperone activity. The binding of ATP and its subsequent hydrolysis by HslU are essential for unfolding of protein substrates subsequently hydrolyzed by HslV. HslU recognizes the N-terminal part of its protein substrates and unfolds these before they are guided to HslV for hydrolysis. This Nitrosomonas europaea (strain ATCC 19718 / CIP 103999 / KCTC 2705 / NBRC 14298) protein is ATP-dependent protease ATPase subunit HslU.